The following is a 488-amino-acid chain: 3-octaprenyl-4-hydroxybenzoate carboxy-lyase (488 aa).

Position 172 (Asn-172) interacts with Mn(2+). Prenylated FMN-binding positions include 175–177 (IYR), 189–191 (RWL), and 194–195 (RG). Glu-238 provides a ligand contact to Mn(2+). Catalysis depends on Asp-287, which acts as the Proton donor.

It belongs to the UbiD family. In terms of assembly, homohexamer. Prenylated FMN is required as a cofactor. Requires Mn(2+) as cofactor.

Its subcellular location is the cell membrane. It catalyses the reaction a 4-hydroxy-3-(all-trans-polyprenyl)benzoate + H(+) = a 2-(all-trans-polyprenyl)phenol + CO2. It participates in cofactor biosynthesis; ubiquinone biosynthesis. Functionally, catalyzes the decarboxylation of 3-octaprenyl-4-hydroxy benzoate to 2-octaprenylphenol, an intermediate step in ubiquinone biosynthesis. The sequence is that of 3-octaprenyl-4-hydroxybenzoate carboxy-lyase from Legionella pneumophila (strain Paris).